The primary structure comprises 452 residues: Bifunctional protein GlmU (452 aa).

Residues 1–232 form a pyrophosphorylase region; the sequence is MTTNAPGAVI…EADMQGVNSR (232 aa). Residues 11–14, Lys25, Gln78, and 83–84 each bind UDP-N-acetyl-alpha-D-glucosamine; these read LAAG and GT. Asp108 is a binding site for Mg(2+). Residues Gly144, Glu158, and Asn230 each contribute to the UDP-N-acetyl-alpha-D-glucosamine site. Asn230 provides a ligand contact to Mg(2+). Residues 233-253 form a linker region; sequence ADLAAAEATMQQRLRMAAMAG. The interval 254–452 is N-acetyltransferase; sequence GVTMLDPSSV…HKDKKKASGE (199 aa). The UDP-N-acetyl-alpha-D-glucosamine site is built by Arg319 and Lys337. Residue His349 is the Proton acceptor of the active site. Positions 352 and 363 each coordinate UDP-N-acetyl-alpha-D-glucosamine. Acetyl-CoA is bound by residues Ala366, 372-373, Ser391, Ser409, and Arg426; that span reads NY.

In the N-terminal section; belongs to the N-acetylglucosamine-1-phosphate uridyltransferase family. It in the C-terminal section; belongs to the transferase hexapeptide repeat family. As to quaternary structure, homotrimer. The cofactor is Mg(2+).

Its subcellular location is the cytoplasm. The catalysed reaction is alpha-D-glucosamine 1-phosphate + acetyl-CoA = N-acetyl-alpha-D-glucosamine 1-phosphate + CoA + H(+). It catalyses the reaction N-acetyl-alpha-D-glucosamine 1-phosphate + UTP + H(+) = UDP-N-acetyl-alpha-D-glucosamine + diphosphate. It functions in the pathway nucleotide-sugar biosynthesis; UDP-N-acetyl-alpha-D-glucosamine biosynthesis; N-acetyl-alpha-D-glucosamine 1-phosphate from alpha-D-glucosamine 6-phosphate (route II): step 2/2. It participates in nucleotide-sugar biosynthesis; UDP-N-acetyl-alpha-D-glucosamine biosynthesis; UDP-N-acetyl-alpha-D-glucosamine from N-acetyl-alpha-D-glucosamine 1-phosphate: step 1/1. The protein operates within bacterial outer membrane biogenesis; LPS lipid A biosynthesis. Its function is as follows. Catalyzes the last two sequential reactions in the de novo biosynthetic pathway for UDP-N-acetylglucosamine (UDP-GlcNAc). The C-terminal domain catalyzes the transfer of acetyl group from acetyl coenzyme A to glucosamine-1-phosphate (GlcN-1-P) to produce N-acetylglucosamine-1-phosphate (GlcNAc-1-P), which is converted into UDP-GlcNAc by the transfer of uridine 5-monophosphate (from uridine 5-triphosphate), a reaction catalyzed by the N-terminal domain. In Parvibaculum lavamentivorans (strain DS-1 / DSM 13023 / NCIMB 13966), this protein is Bifunctional protein GlmU.